We begin with the raw amino-acid sequence, 1141 residues long: Myosin-binding protein C, fast-type (1141 aa).

Residues 1-62 (MPEAKPAAKK…VFLKKPDSVS (62 aa)) form a disordered region. The span at 13-39 (KGKDAPKGAPKEAPPKEAPAEAPKEAP) shows a compositional bias: basic and acidic residues. Ig-like C2-type domains are found at residues 50-153 (PTGV…NIDV), 255-344 (SAAF…VKEP), 345-437 (PVLI…VEEK), 438-538 (QLEV…KQEP), and 539-638 (PKIH…VVDV). Fibronectin type-III domains follow at residues 641–737 (PPEA…IAPT) and 739–834 (EPLH…IREI). Residues 838-932 (PKIRLPRHLR…ATIRIRVVEK (95 aa)) enclose the Ig-like C2-type 6 domain. The 96-residue stretch at 935 to 1030 (PPINVMVKEV…SKNTARILKT (96 aa)) folds into the Fibronectin type-III 3 domain. An Ig-like C2-type 7 domain is found at 1048–1141 (PKFLTPLIDR…ECKLEVRVPQ (94 aa)).

This sequence belongs to the immunoglobulin superfamily. MyBP family.

Its function is as follows. Thick filament-associated protein located in the crossbridge region of vertebrate striated muscle a bands. In vitro it binds MHC, F-actin and native thin filaments, and modifies the activity of actin-activated myosin ATPase. It may modulate muscle contraction or may play a more structural role. The chain is Myosin-binding protein C, fast-type (MYBPC2) from Homo sapiens (Human).